The following is a 430-amino-acid chain: Adenylosuccinate synthetase (430 aa).

GTP contacts are provided by residues 12-18 (GDEGKGK) and 40-42 (GHT). The Proton acceptor role is filled by D13. Positions 13 and 40 each coordinate Mg(2+). IMP-binding positions include 13–16 (DEGK), 38–41 (NAGH), T130, R144, Q224, and T239. Residue H41 is the Proton donor of the active site. Positions 277–297 (PFPTEQDNETGRKIGERGREF) are disordered. A compositionally biased stretch (basic and acidic residues) spans 285–296 (ETGRKIGERGRE). 299 to 305 (TNTGRPR) contacts substrate. R303 contributes to the IMP binding site. Residues R305, 331 to 333 (KLD), and 413 to 415 (STS) each bind GTP.

This sequence belongs to the adenylosuccinate synthetase family. Homodimer. Mg(2+) serves as cofactor.

The protein resides in the cytoplasm. It carries out the reaction IMP + L-aspartate + GTP = N(6)-(1,2-dicarboxyethyl)-AMP + GDP + phosphate + 2 H(+). It participates in purine metabolism; AMP biosynthesis via de novo pathway; AMP from IMP: step 1/2. Plays an important role in the de novo pathway of purine nucleotide biosynthesis. Catalyzes the first committed step in the biosynthesis of AMP from IMP. In Bradyrhizobium sp. (strain ORS 278), this protein is Adenylosuccinate synthetase.